A 234-amino-acid polypeptide reads, in one-letter code: Toxic shock syndrome toxin-1 (234 aa).

An N-terminal signal peptide occupies residues 1-40 (MNKKLLMNFFIVSPLLLATTATDFTPVPLSSNQIIKTAKA).

It belongs to the staphylococcal/streptococcal toxin family.

It is found in the secreted. In terms of biological role, responsible for the symptoms of toxic shock syndrome. In Staphylococcus aureus, this protein is Toxic shock syndrome toxin-1 (tst).